We begin with the raw amino-acid sequence, 428 residues long: Glutamate-1-semialdehyde 2,1-aminomutase 1 (428 aa).

N6-(pyridoxal phosphate)lysine is present on Lys-267.

It belongs to the class-III pyridoxal-phosphate-dependent aminotransferase family. HemL subfamily. In terms of assembly, homodimer. Pyridoxal 5'-phosphate is required as a cofactor.

Its subcellular location is the cytoplasm. The catalysed reaction is (S)-4-amino-5-oxopentanoate = 5-aminolevulinate. It participates in porphyrin-containing compound metabolism; protoporphyrin-IX biosynthesis; 5-aminolevulinate from L-glutamyl-tRNA(Glu): step 2/2. This chain is Glutamate-1-semialdehyde 2,1-aminomutase 1, found in Staphylococcus aureus (strain bovine RF122 / ET3-1).